Consider the following 623-residue polypeptide: NAD-dependent malic enzyme 1, mitochondrial (623 aa).

A mitochondrion-targeting transit peptide spans 1–38; that stretch reads MGIANKLRLSSSSLSRILHRRILYSSAVRSFTTSEGHR. The active-site Proton donor is Tyr143. Position 196 (Arg196) interacts with NAD(+). Lys214 functions as the Proton acceptor in the catalytic mechanism. Positions 285, 286, and 309 each coordinate a divalent metal cation. The NAD(+) site is built by Asp309 and Asn464.

It belongs to the malic enzymes family. As to quaternary structure, homodimer. Heterodimer of two related subunits in NAD-MEH complex. Interacts with NAD-ME2. It depends on Mg(2+) as a cofactor. Mn(2+) is required as a cofactor. As to expression, expressed in leaves, stems, flowers, and roots (at protein level).

It localises to the mitochondrion. It catalyses the reaction (S)-malate + NAD(+) = pyruvate + CO2 + NADH. Its activity is regulated as follows. Activated by oxaloacetate (OAA), 2-ketoglutarate, succinate and fumarate as homodimer and by OAA, 2-ketoglutarate, succinate, fumarate and coenzyme A (acetyl-CoA and CoA) as heterodimer NAD-MEH. Functionally, involved in the regulation of sugars and amino acids metabolisms during the night period. This chain is NAD-dependent malic enzyme 1, mitochondrial (NAD-ME1), found in Arabidopsis thaliana (Mouse-ear cress).